An 807-amino-acid chain; its full sequence is Glycerol-3-phosphate acyltransferase (807 aa).

Residues 308-313 (CHRSHM) carry the HXXXXD motif motif.

The protein belongs to the GPAT/DAPAT family.

The protein resides in the cell inner membrane. It catalyses the reaction sn-glycerol 3-phosphate + an acyl-CoA = a 1-acyl-sn-glycero-3-phosphate + CoA. It participates in phospholipid metabolism; CDP-diacylglycerol biosynthesis; CDP-diacylglycerol from sn-glycerol 3-phosphate: step 1/3. The sequence is that of Glycerol-3-phosphate acyltransferase from Shewanella sp. (strain W3-18-1).